The chain runs to 473 residues: MAVKSYQAGVTQYRQSYWQPDYMPLDTDILACFKITPQPGVDREEAAAAVAAESSCGTWTTVWTDLLTDLDYYKGRAYRLEDVPGDDTCYYAFIAYPIDLFEEGSVVNVFTSLVGNVFGFKAVRALRLEDLRFPIAYVKTCGGPPHGIQVERDKLNKYGRPLLGCTIKPKLGLSAKNYGRACYEALRGGLDFTKDDENINSQPFMRWRDRFDFVMEAVQKAEQETGERKGHYLNVTAPTPEEMYKRAEYAKEIRAPIIMHDYLAGGLCANAGLANWCRNNGMLLHIHRAMHAVIDRNPHHGIHFRVLTKILRPSGGDHLHTGTVVGKLEGDRASTLGWIDLLRESFVPEDRSRGIFFDQDWGSMPGGFAVASGGIHVWHMPALVTIFGDDSVLQFGGGTLGHPWGNAAGAHANRVALEACVQARGEGRHLEKEGKDILTAAAAQSPELKIAMETWKEIKFEFETMDKLAIANK.

The substrate site is built by Asn116 and Thr166. Catalysis depends on Lys168, which acts as the Proton acceptor. Residue Lys170 coordinates substrate. Mg(2+) is bound by residues Lys194, Asp196, and Glu197. Lys194 carries the N6-carboxylysine modification. The active-site Proton acceptor is the His287. Substrate-binding residues include Arg288, His320, and Ser372.

It belongs to the RuBisCO large chain family. Type I subfamily. As to quaternary structure, heterohexadecamer of 8 large chains and 8 small chains. It depends on Mg(2+) as a cofactor.

It carries out the reaction 2 (2R)-3-phosphoglycerate + 2 H(+) = D-ribulose 1,5-bisphosphate + CO2 + H2O. It catalyses the reaction D-ribulose 1,5-bisphosphate + O2 = 2-phosphoglycolate + (2R)-3-phosphoglycerate + 2 H(+). Its function is as follows. RuBisCO catalyzes two reactions: the carboxylation of D-ribulose 1,5-bisphosphate, the primary event in carbon dioxide fixation, as well as the oxidative fragmentation of the pentose substrate. Both reactions occur simultaneously and in competition at the same active site. The polypeptide is Ribulose bisphosphate carboxylase large chain (Nitrobacter winogradskyi (Nitrobacter agilis)).